The chain runs to 1182 residues: Rho guanine nucleotide exchange factor osg-1 (1182 aa).

Positions 1–12 (MLNPNDADDSDS) are enriched in acidic residues. A disordered region spans residues 1–96 (MLNPNDADDS…TNSEPNVDMP (96 aa)). Residues 29 to 41 (ATVSPSTRNSFYN) show a composition bias toward polar residues. Residues 69–78 (ASRERSESRR) show a composition bias toward basic and acidic residues. The DH domain maps to 357-544 (VRHLAARELL…HCLAVAINQH (188 aa)). Positions 637–669 (EDVQISKDTLSQLEEVERKLESSREDDRVLKKM) form a coiled coil. A disordered region spans residues 863–884 (INSSGSDTESSSDEGTSTAGQT). Low complexity predominate over residues 865–879 (SSGSDTESSSDEGTS). Positions 897-922 (VVNSTERVRSRARDRLARLRNSITSI) form a coiled coil.

As to expression, expressed in muscles in the body wall and head, and in the nervous system in neurons including FLP and ASE neurons in the head.

Functionally, probable guanine nucleotide exchange factor which regulates the Rho GTPase rho-1. Functions in ASE sensory neurons where it promotes neuronal degeneration under conditions of oxidative stress. This is Rho guanine nucleotide exchange factor osg-1 from Caenorhabditis elegans.